A 137-amino-acid chain; its full sequence is Large ribosomal subunit protein uL16 (137 aa).

The protein belongs to the universal ribosomal protein uL16 family. Part of the 50S ribosomal subunit.

Its function is as follows. Binds 23S rRNA and is also seen to make contacts with the A and possibly P site tRNAs. The polypeptide is Large ribosomal subunit protein uL16 (Psychrobacter sp. (strain PRwf-1)).